Consider the following 251-residue polypeptide: MSMPNIVPPAEVRTEGLSLEEYDEEQVRLMEERCILVNPDDVAYGEASKKTCHLMSNINAPKDLLHRAFSVFLFRPSDGALLLQRRADEKITFPGMWTNTCCSHPLSIKGEVKEENQIGVRRAASRKLEHELGVPTSSTPPDSFTYLTRIHYLAPSDGLWGEHEIDYILFSTTPTEHTGNPNEVSDTRYVTKPELQAMFEDESNSFTPWFKLIARDFLFGWWDQLLARRNEKGEVDAKSLEDLSDNKVWKM.

Lys-49 contributes to the substrate binding site. Residues His-53 and His-66 each coordinate Mg(2+). A Nudix hydrolase domain is found at 64-212; the sequence is LLHRAFSVFL…SNSFTPWFKL (149 aa). Arg-86 and Lys-90 together coordinate substrate. The active site involves Cys-102. Substrate is bound at residue Ser-103. The Mg(2+) site is built by Glu-162 and Glu-164. Residue Glu-164 is part of the active site.

It belongs to the IPP isomerase type 1 family. Mg(2+) is required as a cofactor.

The protein localises to the cytoplasm. The enzyme catalyses isopentenyl diphosphate = dimethylallyl diphosphate. Its pathway is isoprenoid biosynthesis; dimethylallyl diphosphate biosynthesis; dimethylallyl diphosphate from isopentenyl diphosphate: step 1/1. Functionally, isopentenyl-diphosphate delta-isomerase; part of the second module of ergosterol biosynthesis pathway that includes the middle steps of the pathway. The second module is carried out in the vacuole and involves the formation of farnesyl diphosphate, which is also an important intermediate in the biosynthesis of ubiquinone, dolichol, heme and prenylated proteins. Activity by the mevalonate kinase first converts mevalonate into 5-phosphomevalonate. 5-phosphomevalonate is then further converted to 5-diphosphomevalonate by the phosphomevalonate kinase. The diphosphomevalonate decarboxylase then produces isopentenyl diphosphate. The isopentenyl-diphosphate delta-isomerase then catalyzes the 1,3-allylic rearrangement of the homoallylic substrate isopentenyl (IPP) to its highly electrophilic allylic isomer, dimethylallyl diphosphate (DMAPP). Finally the farnesyl diphosphate synthase catalyzes the sequential condensation of isopentenyl pyrophosphate with dimethylallyl pyrophosphate, and then with the resultant geranylpyrophosphate to the ultimate product farnesyl pyrophosphate. This is Isopentenyl-diphosphate delta-isomerase from Phaffia rhodozyma (Yeast).